The sequence spans 137 residues: Large ribosomal subunit protein uL16 (137 aa).

It belongs to the universal ribosomal protein uL16 family. In terms of assembly, part of the 50S ribosomal subunit.

Functionally, binds 23S rRNA and is also seen to make contacts with the A and possibly P site tRNAs. The polypeptide is Large ribosomal subunit protein uL16 (Aromatoleum aromaticum (strain DSM 19018 / LMG 30748 / EbN1) (Azoarcus sp. (strain EbN1))).